Here is a 694-residue protein sequence, read N- to C-terminus: LMBR1 domain-containing protein 2 homolog (694 aa).

The Extracellular portion of the chain corresponds to 1 to 3 (MAY). A helical transmembrane segment spans residues 4 to 26 (LLSFGIVAALFLASISLYRYGNI). The Cytoplasmic portion of the chain corresponds to 27–30 (PRQH). A helical membrane pass occupies residues 31-51 (ILVTLSVLTAWCFSFLIVFTI). Topologically, residues 52–106 (PLDVTSTLYRQCVEEHRPTPAPNVTNTSSATVGPPPQCQEPWGMVPASVFPNLWR) are extracellular. N-linked (GlcNAc...) asparagine glycans are attached at residues N74 and N77. The chain crosses the membrane as a helical span at residues 107–127 (IIYWSSQFLTWLIMPLMQSYL). Topologically, residues 128–144 (KAGDFTVKGKLKSALIE) are cytoplasmic. Residues 145 to 165 (NAIYYGSYLFICGVLLIYIAV) traverse the membrane as a helical segment. Residues 166 to 181 (KGESLDWQKLKAIASS) are Extracellular-facing. The chain crosses the membrane as a helical span at residues 182 to 202 (ASNTWGLFLLILLLGYALVEV). Residues 203–381 (PRSLWNNAKP…ECLLKAPFLK (179 aa)) are Cytoplasmic-facing. Positions 222–249 (KAAKLSTEKAEAEEHVDDILESLQGLSR) form a coiled coil. A helical membrane pass occupies residues 382 to 402 (TMCVLTATMSAMVVWSELTFF). At 403 to 426 (SRHPVLSIFANVIYVAKESYDFFT) the chain is on the extracellular side. Residues 427-447 (IEVFSMVVLCYFFYCTYSTIL) traverse the membrane as a helical segment. Over 448–467 (RIRFLNLYYLAPHHQTNEHS) the chain is Cytoplasmic. The helical transmembrane segment at 468-488 (LIFSGMLLCRLTPPMCLNFLG) threads the bilayer. The Extracellular portion of the chain corresponds to 489 to 514 (LIHMDTHIIPNRIMETVYTQIMGHMD). Residues 515–535 (VIGIISNGFNIYFPMCMLAFC) traverse the membrane as a helical segment. At 536-694 (LATWFSLGSR…PPPRGLFDDV (159 aa)) the chain is on the cytoplasmic side. A coiled-coil region spans residues 564–592 (ELVQEGKDLIAREKRRRQRAEEAMARRRD). Residues 673–694 (DYEAETDGRIVGPPPRGLFDDV) form a disordered region.

The protein belongs to the LIMR family.

It is found in the membrane. The polypeptide is LMBR1 domain-containing protein 2 homolog (Drosophila melanogaster (Fruit fly)).